Consider the following 206-residue polypeptide: Ion-translocating oxidoreductase complex subunit G (206 aa).

A helical transmembrane segment spans residues 9 to 29 (GITLALFAAGSTGLTAVINQM). Position 174 is an FMN phosphoryl threonine (T174).

Belongs to the RnfG family. As to quaternary structure, the complex is composed of six subunits: RsxA, RsxB, RsxC, RsxD, RsxE and RsxG. FMN is required as a cofactor.

The protein resides in the cell inner membrane. In terms of biological role, part of a membrane-bound complex that couples electron transfer with translocation of ions across the membrane. Required to maintain the reduced state of SoxR. The sequence is that of Ion-translocating oxidoreductase complex subunit G from Salmonella typhi.